A 459-amino-acid chain; its full sequence is tRNA modification GTPase MnmE (459 aa).

Positions 22, 85, and 124 each coordinate (6S)-5-formyl-5,6,7,8-tetrahydrofolate. The TrmE-type G domain occupies 221–380; the sequence is GLSTVIVGKP…LEIQIRDLFF (160 aa). Asn231 lines the K(+) pocket. GTP-binding positions include 231 to 236, 250 to 256, and 275 to 278; these read NVGKSS, TEVAGTT, and DTAG. Residue Ser235 coordinates Mg(2+). K(+) is bound by residues Thr250, Val252, and Thr255. Thr256 lines the Mg(2+) pocket. Lys459 contacts (6S)-5-formyl-5,6,7,8-tetrahydrofolate.

Belongs to the TRAFAC class TrmE-Era-EngA-EngB-Septin-like GTPase superfamily. TrmE GTPase family. Homodimer. Heterotetramer of two MnmE and two MnmG subunits. The cofactor is K(+).

Its subcellular location is the cytoplasm. Exhibits a very high intrinsic GTPase hydrolysis rate. Involved in the addition of a carboxymethylaminomethyl (cmnm) group at the wobble position (U34) of certain tRNAs, forming tRNA-cmnm(5)s(2)U34. This chain is tRNA modification GTPase MnmE, found in Staphylococcus aureus (strain Mu3 / ATCC 700698).